We begin with the raw amino-acid sequence, 398 residues long: Enoyl-[acyl-carrier-protein] reductase [NADH] (398 aa).

Residues 48 to 53 (GASTGY), 74 to 75 (FE), 111 to 112 (DG), and 139 to 140 (LA) each bind NAD(+). A substrate-binding site is contributed by Y225. Y235 (proton donor) is an active-site residue. NAD(+) contacts are provided by residues K244 and 273–275 (VVT).

It belongs to the TER reductase family. In terms of assembly, monomer.

It carries out the reaction a 2,3-saturated acyl-[ACP] + NAD(+) = a (2E)-enoyl-[ACP] + NADH + H(+). Its pathway is lipid metabolism; fatty acid biosynthesis. Functionally, involved in the final reduction of the elongation cycle of fatty acid synthesis (FAS II). Catalyzes the reduction of a carbon-carbon double bond in an enoyl moiety that is covalently linked to an acyl carrier protein (ACP). In Variovorax paradoxus (strain S110), this protein is Enoyl-[acyl-carrier-protein] reductase [NADH].